The following is a 254-amino-acid chain: UstYa family oxidase phomYc' (254 aa).

The helical transmembrane segment at 38–58 (LVLVLQSVLIISLLASLHILG) threads the bilayer. Asn-64 is a glycosylation site (N-linked (GlcNAc...) asparagine). An HXXHC 1 motif is present at residues 138 to 142 (HQLHC). Asn-159 carries N-linked (GlcNAc...) asparagine glycosylation. Residues 173-177 (HIDHC) carry the HXXHC 2 motif.

It belongs to the ustYa family.

It localises to the membrane. Its pathway is mycotoxin biosynthesis. Functionally, ustYa family oxidase; part of the gene cluster that mediates the biosynthesis of the phomopsins, a group of hexapeptide mycotoxins which infects lupins and causes lupinosis disease in livestock. Within the pathway, phomYc' catalyzes the desaturation of the Ile moiety into 2,3-dehydroisoleucine (dIle). The pathway starts with the processing of the precursor phomA' by several endopeptidases including kexin proteases as well as the cluster-specific S41 family peptidase phomP1 and the oligopeptidase phomG' to produce 10 identical copies of the hexapeptide Tyr-Val-Ile-Pro-Ile-Asp. After being excised from the precursor peptide, the core peptides are cyclized and modified post-translationally by enzymes encoded within the gene cluster. The timing and order of proteolysis of the phomA' precursor and PTMs are still unknown. Two tyrosinase-like enzymes, phomQ1' and phomQ2, catalyze the chlorination and hydroxylation of Tyr, respectively. PhomYb, is proposed to be involved in the construction of the macrocyclic structure. The other 4 ustYa family proteins may be involved in PTMs that generate the unique structure of phomopsin A. PhomYa' is required for the hydroxylation of C-beta of Tyr. PhomYc', phomYd', and phomYe are responsible for the biosynthesis of 2,3-dehydroisoleucine (dIle), 2,3-dehydroaspartic acid (dAsp), and 3,4-dehydroproline (dPro), respectively. While dIle formation by phomYc' is indispensable for the installation of dAsp by phomYd', the order of the other PTMs have not been elucidated yet. Most of the biosynthetic enzymes likely have broad substrate specificity, and thus, there might be a metabolic grid from a precursor to phomopsin A. The enzyme(s) responsible for the biosynthesis of 3,4-dehydrovaline (dVal) have also not been identified yet. Finally, phomM' acts as an S-adenosylmethionine-dependent alpha-N-methyltransferase that catalyzes two successive N-methylation reactions, converting N-desmethyl-phomopsin A to phomopsin A and phomopsin A further to an N,N-dimethylated congener called phomopsin E. The chain is UstYa family oxidase phomYc' from Diaporthe leptostromiformis (Lupinosis disease fungus).